The sequence spans 183 residues: Ribulose bisphosphate carboxylase small subunit, chloroplastic 5 (183 aa).

Residues 1-42 (MAAAMMNKSVLLNKQCGKPAAVPKVVMSKGGFARTSAVNKNR) constitute a chloroplast transit peptide.

It belongs to the RuBisCO small chain family. As to quaternary structure, heterohexadecamer of 8 large and 8 small subunits.

It localises to the plastid. The protein localises to the chloroplast. RuBisCO catalyzes two reactions: the carboxylation of D-ribulose 1,5-bisphosphate, the primary event in carbon dioxide fixation, as well as the oxidative fragmentation of the pentose substrate. Both reactions occur simultaneously and in competition at the same active site. Although the small subunit is not catalytic it is essential for maximal activity. The protein is Ribulose bisphosphate carboxylase small subunit, chloroplastic 5 of Acetabularia acetabulum (Mermaid's wine glass).